Consider the following 102-residue polypeptide: uncharacterized protein (102 aa).

This is an uncharacterized protein from Homo sapiens (Human).